A 185-amino-acid chain; its full sequence is Ribosome-recycling factor (185 aa).

It belongs to the RRF family.

Its subcellular location is the cytoplasm. Responsible for the release of ribosomes from messenger RNA at the termination of protein biosynthesis. May increase the efficiency of translation by recycling ribosomes from one round of translation to another. The chain is Ribosome-recycling factor from Erwinia tasmaniensis (strain DSM 17950 / CFBP 7177 / CIP 109463 / NCPPB 4357 / Et1/99).